Reading from the N-terminus, the 245-residue chain is DNA repair protein RecO (245 aa).

It belongs to the RecO family.

Functionally, involved in DNA repair and RecF pathway recombination. The polypeptide is DNA repair protein RecO (Klebsiella pneumoniae subsp. pneumoniae (strain ATCC 700721 / MGH 78578)).